A 473-amino-acid polypeptide reads, in one-letter code: Photosystem II CP43 reaction center protein (473 aa).

Positions 1–14 are excised as a propeptide; that stretch reads MKTLYSPRRFYPVE. Thr15 bears the N-acetylthreonine mark. Thr15 carries the post-translational modification Phosphothreonine. The next 5 membrane-spanning stretches (helical) occupy residues 69 to 93, 134 to 155, 178 to 200, 255 to 275, and 291 to 312; these read LFEV…PHLA, LIGP…KDRN, KALF…RKIT, KPFA…LSYS, and WFNN…ASQA. Glu367 lines the [CaMn4O5] cluster pocket. The chain crosses the membrane as a helical span at residues 447 to 471; the sequence is RARAAAAGFEKGIDRDLEPVLFMTP.

Belongs to the PsbB/PsbC family. PsbC subfamily. In terms of assembly, PSII is composed of 1 copy each of membrane proteins PsbA, PsbB, PsbC, PsbD, PsbE, PsbF, PsbH, PsbI, PsbJ, PsbK, PsbL, PsbM, PsbT, PsbX, PsbY, PsbZ, Psb30/Ycf12, at least 3 peripheral proteins of the oxygen-evolving complex and a large number of cofactors. It forms dimeric complexes. Binds multiple chlorophylls and provides some of the ligands for the Ca-4Mn-5O cluster of the oxygen-evolving complex. It may also provide a ligand for a Cl- that is required for oxygen evolution. PSII binds additional chlorophylls, carotenoids and specific lipids. serves as cofactor.

Its subcellular location is the plastid. It is found in the chloroplast thylakoid membrane. Functionally, one of the components of the core complex of photosystem II (PSII). It binds chlorophyll and helps catalyze the primary light-induced photochemical processes of PSII. PSII is a light-driven water:plastoquinone oxidoreductase, using light energy to abstract electrons from H(2)O, generating O(2) and a proton gradient subsequently used for ATP formation. The chain is Photosystem II CP43 reaction center protein from Welwitschia mirabilis (Tree tumbo).